A 387-amino-acid polypeptide reads, in one-letter code: 4-hydroxy-3-methylbut-2-en-1-yl diphosphate synthase (flavodoxin) (387 aa).

Positions 280, 283, 315, and 322 each coordinate [4Fe-4S] cluster.

Belongs to the IspG family. Requires [4Fe-4S] cluster as cofactor.

It catalyses the reaction (2E)-4-hydroxy-3-methylbut-2-enyl diphosphate + oxidized [flavodoxin] + H2O + 2 H(+) = 2-C-methyl-D-erythritol 2,4-cyclic diphosphate + reduced [flavodoxin]. The protein operates within isoprenoid biosynthesis; isopentenyl diphosphate biosynthesis via DXP pathway; isopentenyl diphosphate from 1-deoxy-D-xylulose 5-phosphate: step 5/6. Its function is as follows. Converts 2C-methyl-D-erythritol 2,4-cyclodiphosphate (ME-2,4cPP) into 1-hydroxy-2-methyl-2-(E)-butenyl 4-diphosphate. This chain is 4-hydroxy-3-methylbut-2-en-1-yl diphosphate synthase (flavodoxin), found in Mycobacterium bovis (strain BCG / Pasteur 1173P2).